The primary structure comprises 1243 residues: Protein MMS22-like (1243 aa).

This sequence belongs to the MMS22 family. MMS22L subfamily. As to quaternary structure, component of the MMS22L-TONSL complex, a complex at least composed of MMS22L and TONSL/NFKBIL2. Interacts with RAD51; interaction is direct. Post-translationally, degraded by the ubiquitin-proteasome system upon replication stress.

It is found in the nucleus. Its subcellular location is the chromosome. Functionally, component of the MMS22L-TONSL complex, a complex that promotes homologous recombination-mediated repair of double-strand breaks (DSBs) at stalled or collapsed replication forks. The MMS22L-TONSL complex is required to maintain genome integrity during DNA replication. It mediates the assembly of RAD51 filaments on single-stranded DNA (ssDNA): the MMS22L-TONSL complex is recruited to DSBs following histone replacement by histone chaperones and eviction of the replication protein A complex (RPA/RP-A) from DSBs. Following recruitment to DSBs, the TONSL-MMS22L complex promotes recruitment of RAD51 filaments and subsequent homologous recombination. Within the complex, MMS22L acts by binding ssDNA. This is Protein MMS22-like from Homo sapiens (Human).